The sequence spans 324 residues: Zinc finger C2HC domain-containing protein 1A (324 aa).

Residues 15–44 (DLLPCKICGRTFFPLALKKHGPICQKTATK) form a C2HC/C3H-type 1 zinc finger. Residues Cys19, Cys22, His34, and Cys38 each contribute to the Zn(2+) site. A disordered region spans residues 43-83 (TKKRKTFDSSRQRAEGTDIPTVKPLKPRPEPPKKPSNWRRK). Residues 48–58 (TFDSSRQRAEG) show a composition bias toward basic and acidic residues. A C2HC/C3H-type 2 zinc finger spans residues 118–147 (DYIQCPYCQRRFNENAADRHINFCKEQAAR). 4 residues coordinate Zn(2+): Cys122, Cys125, His137, and Cys141. Residues 149 to 225 (SNKGKFSTDS…NKPQTLSPSH (77 aa)) form a disordered region. Residues 176–187 (SNPPGIPSSGSS) show a composition bias toward low complexity. Composition is skewed to polar residues over residues 188-198 (RLPQPSTTSKT) and 206-223 (KASS…TLSP). Ser222 is subject to Phosphoserine. At Thr243 the chain carries Phosphothreonine. Phosphoserine is present on Ser291.

The protein belongs to the ZC2HC1 family. Zn(2+) serves as cofactor.

The chain is Zinc finger C2HC domain-containing protein 1A (Zc2hc1a) from Mus musculus (Mouse).